A 226-amino-acid polypeptide reads, in one-letter code: Ribonuclease 3 (226 aa).

The region spanning 4–127 (LEEFEKKLGY…VMGAIYLEKG (124 aa)) is the RNase III domain. Glutamate 40 lines the Mg(2+) pocket. Aspartate 44 is a catalytic residue. 2 residues coordinate Mg(2+): asparagine 113 and glutamate 116. The active site involves glutamate 116. Residues 154–223 (DFKTALQEFT…AKEALKILKA (70 aa)) form the DRBM domain.

This sequence belongs to the ribonuclease III family. In terms of assembly, homodimer. Requires Mg(2+) as cofactor.

It localises to the cytoplasm. The enzyme catalyses Endonucleolytic cleavage to 5'-phosphomonoester.. Functionally, digests double-stranded RNA. Involved in the processing of primary rRNA transcript to yield the immediate precursors to the large and small rRNAs (23S and 16S). Processes some mRNAs, and tRNAs when they are encoded in the rRNA operon. Processes pre-crRNA and tracrRNA of type II CRISPR loci if present in the organism. The chain is Ribonuclease 3 from Nitratiruptor sp. (strain SB155-2).